Here is a 321-residue protein sequence, read N- to C-terminus: MSDYQMFEVQVSQVEPLTEQVKRFTLVATDGKPLPAFTGGSHVIVQMSDGDNQYSNAYSLLSSPHDTSCYQIAVRLEENSRGGSRFLHQQVKVGDRLTISTPNNLFALIPSARKHLFIAGGIGITPFLSHMAELQHSDVDWQLHYCSRNPESCAFRDELVQHPQAEKVHLHHSSTGTRLELARLLADIEPGTHVYTCGPEALIEAVRSEAARLDIAADTLHFEQFAIEDKTGDAFTLVLARSGKEFVVPEEMTILQVIENNKAAKVECLCREGVCGTCETAILEGEADHRDQYFSDEERASQQSMLICCSRAKGKRLVLDL.

The FAD-binding FR-type domain occupies 4-109 (YQMFEVQVSQ…STPNNLFALI (106 aa)). A 2Fe-2S ferredoxin-type domain is found at 233–321 (DAFTLVLARS…AKGKRLVLDL (89 aa)). Cys270, Cys275, Cys278, and Cys308 together coordinate [2Fe-2S] cluster.

Belongs to the PDR/VanB family. CntB subfamily. In terms of assembly, composed of an oxygenase subunit (yeaW) and a reductase subunit (yeaX). It depends on FMN as a cofactor. The cofactor is [2Fe-2S] cluster.

The catalysed reaction is (R)-carnitine + NADH + O2 + H(+) = (3R)-3-hydroxy-4-oxobutanoate + trimethylamine + NAD(+) + H2O. It carries out the reaction (R)-carnitine + NADPH + O2 + H(+) = (3R)-3-hydroxy-4-oxobutanoate + trimethylamine + NADP(+) + H2O. Its pathway is amine and polyamine metabolism; carnitine metabolism. In terms of biological role, converts carnitine to trimethylamine and malic semialdehyde. Can also use gamma-butyrobetaine, choline and betaine as substrates. The chain is Carnitine monooxygenase reductase subunit (yeaX) from Escherichia coli (strain K12).